The chain runs to 88 residues: Small ribosomal subunit protein uS15c (88 aa).

Belongs to the universal ribosomal protein uS15 family. Part of the 30S ribosomal subunit.

Its subcellular location is the plastid. The protein resides in the chloroplast. This chain is Small ribosomal subunit protein uS15c (rps15), found in Pinus koraiensis (Korean pine).